Here is a 153-residue protein sequence, read N- to C-terminus: Lipoprotein signal peptidase (153 aa).

Helical transmembrane passes span 6-26, 60-80, and 85-105; these read IVAV…SYIV, QQLL…WYLH, and DSFW…GNFI. Catalysis depends on residues Asp115 and Asp131. Residues 124 to 144 traverse the membrane as a helical segment; the sequence is FAIFNVADSYLTVGVIILLIA.

Belongs to the peptidase A8 family.

It is found in the cell membrane. It catalyses the reaction Release of signal peptides from bacterial membrane prolipoproteins. Hydrolyzes -Xaa-Yaa-Zaa-|-(S,diacylglyceryl)Cys-, in which Xaa is hydrophobic (preferably Leu), and Yaa (Ala or Ser) and Zaa (Gly or Ala) have small, neutral side chains.. Its pathway is protein modification; lipoprotein biosynthesis (signal peptide cleavage). This protein specifically catalyzes the removal of signal peptides from prolipoproteins. The protein is Lipoprotein signal peptidase of Streptococcus pneumoniae (strain ATCC BAA-255 / R6).